The following is a 556-amino-acid chain: Set1/Ash2 histone methyltransferase complex subunit ASH2 (556 aa).

A compositionally biased stretch (polar residues) spans 1–19; it reads MEDSQMDTSSPTESSSEVN. The segment at 1 to 27 is disordered; it reads MEDSQMDTSSPTESSSEVNFTAEEDKS. A PHD-type zinc finger spans residues 34–90; it reads AGVCYCGKERNLNIVELLCATCSRWVHETCVSYQLGKGKLLPFITNYVFVCKNCSAS. Cys37, Cys39, Cys52, Cys55, His60, Cys63, Cys84, and Cys87 together coordinate Zn(2+). The disordered stretch occupies residues 216–251; it reads ASLSKNNRQKRKFPGTDSGPTGKKGRPSSDITANVK. Positions 288–510 constitute a B30.2/SPRY domain; the sequence is SSDWAGKPIP…VSVNFGPAFK (223 aa).

In terms of assembly, core component of several methyltransferase-containing complexes. Component of the SET1C/COMPASS complex, composed at least of the catalytic subunit Set1, wds/WDR5, Wdr82, Rbbp5, ash2, Cfp1/CXXC1, hcf and Dpy-30L1. Component of the MLL3/4 (Histone-lysine N-methyltransferase/demethylase TRR) complex composed at least of the catalytic subunit trr, ash2, Rbbp5, Dpy-30L1, wds, hcf, ptip, Pa1, Utx, Lpt and Ncoa6. Interacts with hcf. Interacts with trr. Interacts (via B30.2/SPRY domain) with sktl; the interaction is direct. In terms of tissue distribution, in larvae and pupae, expressed in imaginal disks, salivary gland and fat body cells. No expression detected in central nervous system (at protein level).

It localises to the nucleus. It is found in the chromosome. Its function is as follows. Transcriptional regulator. Regulates a number of genes involved in wing development including activation of net and bs and repression of rho and kni and controls vein-intervein patterning during wing development. Required for correct expression of a number of homeotic genes including Scr in the first leg imaginal disk and Ubx in the third leg imaginal disk and haltere disks. Required for stabilization of the histone-lysine N-methyltransferase trr and for trimethylation of 'Lys-4' of histone H3. Together with sktl probably plays a role in maintenance of transcriptionally active chromatin through down-regulation of histone H1 hyperphosphorylation. This is Set1/Ash2 histone methyltransferase complex subunit ASH2 from Drosophila melanogaster (Fruit fly).